A 43-amino-acid polypeptide reads, in one-letter code: Protein PsbN (43 aa).

The helical transmembrane segment at 7–29 threads the bilayer; that stretch reads VTIFLSGLLVSFTGYALYTAFGQ.

The protein belongs to the PsbN family.

It is found in the plastid. It localises to the chloroplast thylakoid membrane. In terms of biological role, may play a role in photosystem I and II biogenesis. The sequence is that of Protein PsbN from Ipomoea purpurea (Common morning glory).